We begin with the raw amino-acid sequence, 856 residues long: Subtilisin-like protease SBT2.2 (856 aa).

The first 21 residues, 1-21 (MRRVLMVNFGVLLLFCFGVLS), serve as a signal peptide directing secretion. The propeptide at 22–159 (NSFGQDNGGD…IVLDFSVRTA (138 aa)) is activation peptide. Residues Asn-35 and Asn-85 are each glycosylated (N-linked (GlcNAc...) asparagine). One can recognise an Inhibitor I9 domain in the interval 40 to 159 (VYIVTLRQAS…IVLDFSVRTA (120 aa)). The Peptidase S8 domain maps to 164-709 (PQFMGLPKGA…NGFVNATAAL (546 aa)). Asp-193 serves as the catalytic Charge relay system. 2 N-linked (GlcNAc...) asparagine glycosylation sites follow: Asn-204 and Asn-255. The active-site Charge relay system is His-269. Residues Asn-412, Asn-441, Asn-495, Asn-540, and Asn-568 are each glycosylated (N-linked (GlcNAc...) asparagine). One can recognise a PA domain in the interval 432–528 (MISALDALKN…MDMPGIIIPS (97 aa)). Catalysis depends on Ser-634, which acts as the Charge relay system. Asn-704, Asn-730, Asn-738, Asn-748, Asn-767, Asn-782, and Asn-823 each carry an N-linked (GlcNAc...) asparagine glycan.

The protein belongs to the peptidase S8 family.

Its subcellular location is the secreted. The protein is Subtilisin-like protease SBT2.2 of Arabidopsis thaliana (Mouse-ear cress).